The chain runs to 151 residues: uncharacterized protein (151 aa).

The segment at 1–77 is disordered; it reads MSLLGGMWKS…LGSNPISSSR (77 aa). Composition is skewed to low complexity over residues 19 to 54 and 63 to 76; these read PKPS…RSSN and SISG…ISSS.

This is an uncharacterized protein from Methanothermobacter marburgensis (strain ATCC BAA-927 / DSM 2133 / JCM 14651 / NBRC 100331 / OCM 82 / Marburg) (Methanobacterium thermoautotrophicum).